The following is a 59-amino-acid chain: Arabinogalactan protein 13 (59 aa).

The signal sequence occupies residues 1 to 27 (MEAMKMRLFVAVLVAAMAFSAVQQAAA). P31, P33, and P35 each carry 4-hydroxyproline. O-linked (Ara...) hydroxyproline glycans are attached at residues P31, P33, and P35. Residue S37 is the site of GPI-anchor amidated serine attachment. Positions 38 to 59 (DASLAIPAFFASVATLAFGFLF) are cleaved as a propeptide — removed in mature form.

Belongs to the AG-peptide AGP family. Contains 4-hydroxyproline; hydroxylated on Pro-31, Pro-33 and Pro-35. Post-translationally, O-glycosylated on hydroxyprolines; noncontiguous hydroxylproline residues are glycosylated with arabinogalactan.

Its subcellular location is the cell membrane. Its function is as follows. Proteoglycan that seems to be implicated in diverse developmental roles such as differentiation, cell-cell recognition, embryogenesis and programmed cell death. The protein is Arabinogalactan protein 13 of Arabidopsis thaliana (Mouse-ear cress).